The primary structure comprises 202 residues: Recombination protein RecR (202 aa).

The C4-type zinc-finger motif lies at 56-71 (CVVCGTVSDKEHCRIC). The Toprim domain maps to 79–179 (TVICVVEEPK…TVSRLASGLP (101 aa)).

This sequence belongs to the RecR family.

In terms of biological role, may play a role in DNA repair. It seems to be involved in an RecBC-independent recombinational process of DNA repair. It may act with RecF and RecO. The protein is Recombination protein RecR of Rhodococcus jostii (strain RHA1).